The following is an 898-amino-acid chain: Coatomer subunit gamma (898 aa).

HEAT repeat units follow at residues 62–99 (TEATDIFFAATKLFQSKDIPLRRLMYLLLKELSTISQD), 170–207 (EIVKRWANEVQEAISNKSNMVQYHALALLHRIKQHDRL), 280–317 (KEINSAVGVLQNFLNSTKPTLRFAAVRTLNKLAQTNPT), 319–352 (VIPCNLDMENLITDTNRSIATLAITTLLKVGNES), 353–389 (NVERLIKQIANFLGDINDEFKIVVVDAITSLSQKFPK), and 392–427 (KHLIIFLNKILRDEGTLQLKQATLDAILTVVNNIPE). The tract at residues 592–631 (GKSPFSTGASKKGDSVTGTPKSNNASNNNNNNEESSGPES) is disordered. Over residues 613–626 (SNNASNNNNNNEES) the composition is skewed to low complexity.

The protein belongs to the COPG family. Oligomeric complex that consists of at least the alpha, beta, beta', gamma, delta, epsilon and zeta subunits.

It localises to the cytoplasm. It is found in the golgi apparatus membrane. The protein resides in the cytoplasmic vesicle. The protein localises to the COPI-coated vesicle membrane. Functionally, the coatomer is a cytosolic protein complex that binds to dilysine motifs and reversibly associates with Golgi non-clathrin-coated vesicles, which further mediate biosynthetic protein transport from the ER, via the Golgi up to the trans Golgi network. Coatomer complex is required for budding from Golgi membranes, and is essential for the retrograde Golgi-to-ER transport of dilysine-tagged proteins. The protein is Coatomer subunit gamma (copG) of Dictyostelium discoideum (Social amoeba).